Reading from the N-terminus, the 95-residue chain is Small ribosomal subunit protein bS20 (95 aa).

Belongs to the bacterial ribosomal protein bS20 family.

Its function is as follows. Binds directly to 16S ribosomal RNA. The polypeptide is Small ribosomal subunit protein bS20 (Ehrlichia canis (strain Jake)).